The following is a 283-amino-acid chain: Nucleotide-binding protein Hore_15880 (283 aa).

8–15 (GMSGAGKS) lines the ATP pocket. 57-60 (DIRG) is a GTP binding site.

The protein belongs to the RapZ-like family.

Displays ATPase and GTPase activities. This Halothermothrix orenii (strain H 168 / OCM 544 / DSM 9562) protein is Nucleotide-binding protein Hore_15880.